The primary structure comprises 207 residues: Large ribosomal subunit protein uL4 (207 aa).

Belongs to the universal ribosomal protein uL4 family. As to quaternary structure, part of the 50S ribosomal subunit.

Functionally, one of the primary rRNA binding proteins, this protein initially binds near the 5'-end of the 23S rRNA. It is important during the early stages of 50S assembly. It makes multiple contacts with different domains of the 23S rRNA in the assembled 50S subunit and ribosome. In terms of biological role, forms part of the polypeptide exit tunnel. This Rickettsia rickettsii (strain Iowa) protein is Large ribosomal subunit protein uL4.